Here is a 125-residue protein sequence, read N- to C-terminus: Large ribosomal subunit protein bL17 (125 aa).

The protein belongs to the bacterial ribosomal protein bL17 family. In terms of assembly, part of the 50S ribosomal subunit. Contacts protein L32.

The sequence is that of Large ribosomal subunit protein bL17 from Acinetobacter baylyi (strain ATCC 33305 / BD413 / ADP1).